The sequence spans 134 residues: Replication enhancer protein (134 aa).

This sequence belongs to the geminiviridae replication enhancer protein family. As to quaternary structure, homooligomer. Interacts with the replication-associated protein (REP). Interacts with host proliferating cell nuclear antigen (PCNA). Interacts with host retinoblastoma-related protein 1 (RBR1), and may thereby deregulate the host cell cycle. Oligomerization and interaction with PCNA are necessary for optimal replication enhancement.

In terms of biological role, increases viral DNA accumulation. Enhances infectivity and symptom expression. In African cassava mosaic virus (isolate West Kenyan 844) (ACMV), this protein is Replication enhancer protein.